The sequence spans 1193 residues: Tubulin monoglutamylase TTLL4 (1193 aa).

Disordered regions lie at residues 1–37 and 468–535; these read MASAGTEHYSIGLRRGNSFKQRHPSGTVSASPSEKPS and VHLD…CSSL. The span at 24-34 shows a compositional bias: polar residues; it reads PSGTVSASPSE. Over residues 472–482 the composition is skewed to basic and acidic residues; it reads QPGKEPEEAKD. Acidic residues predominate over residues 502–515; it reads EPEDTEDELGDGLE. The region spanning 599 to 942 is the TTL domain; sequence RRLLRWKMST…VLPNMEDIIS (344 aa). Phosphoserine is present on Ser686. Residues Lys716, 722-723, 744-747, and 757-759 each bind ATP; these read RG, QRYL, and KFD. Position 722 (Arg722) interacts with a protein. L-glutamate is bound at residue Arg783. Position 804–805 (804–805) interacts with ATP; sequence TN. L-glutamate is bound by residues Tyr806, Ser807, and Lys828. 3 residues coordinate Mg(2+): Asp888, Glu901, and Asn903. The segment at 913-1027 is c-MTBD region; it reads PLDISIKGQM…RGQFERIFPS (115 aa). Lys919 contacts L-glutamate. Positions 943 to 960 are enriched in low complexity; that stretch reads SSSSPSSSSGSSTSLPSS. Disordered regions lie at residues 943 to 966 and 1092 to 1193; these read SSSSPSSSSGSSTSLPSSPRDKCQ and MTTS…AVSS. Composition is skewed to polar residues over residues 1092-1102 and 1131-1153; these read MTTSKGDGTPN and SQAGLSPISRKTLSSRSNENTSK. Positions 1168-1182 are enriched in low complexity; the sequence is SGQSSRLSAASASQS. Over residues 1183 to 1193 the composition is skewed to polar residues; the sequence is VTDSRLTAVSS.

This sequence belongs to the tubulin--tyrosine ligase family. The cofactor is Mg(2+). In terms of tissue distribution, highly expressed in testis. Expressed in brain, heart, kidney, liver, lung, muscle and spleen. In the brain, expressed in ependymal cilia, the cortex and the striatum. Expressed in blastomere.

The protein resides in the cytoplasm. It localises to the cell projection. Its subcellular location is the cilium. The protein localises to the cytoskeleton. It is found in the cilium basal body. The catalysed reaction is L-glutamyl-[protein] + L-glutamate + ATP = gamma-L-glutamyl-L-glutamyl-[protein] + ADP + phosphate + H(+). Monoglutamylase which modifies both tubulin and non-tubulin proteins, adding a single glutamate on the gamma-carboxyl group of specific glutamate residues of target proteins. Involved in the side-chain initiation step of the polyglutamylation reaction but not in the elongation step. Preferentially modifies beta-tail tubulin over the alpha-tubulin. Monoglutamylates nucleosome assembly proteins NAP1L1 and NAP1L4. Monoglutamylates nucleotidyltransferase CGAS, leading to inhibition of CGAS catalytic activity, thereby preventing antiviral defense function. Involved in KLF4 glutamylation which impedes its ubiquitination, thereby leading to somatic cell reprogramming, pluripotency maintenance and embryogenesis. The chain is Tubulin monoglutamylase TTLL4 from Mus musculus (Mouse).